The sequence spans 110 residues: Ribonuclease P protein component 1 (110 aa).

The protein belongs to the eukaryotic/archaeal RNase P protein component 1 family. Consists of a catalytic RNA component and at least 4-5 protein subunits.

The protein resides in the cytoplasm. The catalysed reaction is Endonucleolytic cleavage of RNA, removing 5'-extranucleotides from tRNA precursor.. Part of ribonuclease P, a protein complex that generates mature tRNA molecules by cleaving their 5'-ends. The sequence is that of Ribonuclease P protein component 1 from Methanosarcina acetivorans (strain ATCC 35395 / DSM 2834 / JCM 12185 / C2A).